Consider the following 262-residue polypeptide: Cytochrome c oxidase subunit 3 (262 aa).

The next 6 membrane-spanning stretches (helical) occupy residues tyrosine 39–tryptophan 59, glycine 83–phenylalanine 103, methionine 120–alanine 140, glycine 163–isoleucine 183, phenylalanine 198–valine 218, and alanine 240–tryptophan 260.

The protein belongs to the cytochrome c oxidase subunit 3 family. As to quaternary structure, component of the cytochrome c oxidase (complex IV, CIV), a multisubunit enzyme composed of a catalytic core of 3 subunits and several supernumerary subunits. The complex exists as a monomer or a dimer and forms supercomplexes (SCs) in the inner mitochondrial membrane with ubiquinol-cytochrome c oxidoreductase (cytochrome b-c1 complex, complex III, CIII).

The protein resides in the mitochondrion inner membrane. It carries out the reaction 4 Fe(II)-[cytochrome c] + O2 + 8 H(+)(in) = 4 Fe(III)-[cytochrome c] + 2 H2O + 4 H(+)(out). In terms of biological role, component of the cytochrome c oxidase, the last enzyme in the mitochondrial electron transport chain which drives oxidative phosphorylation. The respiratory chain contains 3 multisubunit complexes succinate dehydrogenase (complex II, CII), ubiquinol-cytochrome c oxidoreductase (cytochrome b-c1 complex, complex III, CIII) and cytochrome c oxidase (complex IV, CIV), that cooperate to transfer electrons derived from NADH and succinate to molecular oxygen, creating an electrochemical gradient over the inner membrane that drives transmembrane transport and the ATP synthase. Cytochrome c oxidase is the component of the respiratory chain that catalyzes the reduction of oxygen to water. Electrons originating from reduced cytochrome c in the intermembrane space (IMS) are transferred via the dinuclear copper A center (CU(A)) of subunit 2 and heme A of subunit 1 to the active site in subunit 1, a binuclear center (BNC) formed by heme A3 and copper B (CU(B)). The BNC reduces molecular oxygen to 2 water molecules using 4 electrons from cytochrome c in the IMS and 4 protons from the mitochondrial matrix. The protein is Cytochrome c oxidase subunit 3 (mt:CoIII) of Drosophila melanogaster (Fruit fly).